A 514-amino-acid chain; its full sequence is 1-pyrroline-5-carboxylate dehydrogenase (514 aa).

Residues Glu-286 and Cys-320 contribute to the active site.

This sequence belongs to the aldehyde dehydrogenase family. RocA subfamily.

It catalyses the reaction L-glutamate 5-semialdehyde + NAD(+) + H2O = L-glutamate + NADH + 2 H(+). It participates in amino-acid degradation; L-proline degradation into L-glutamate; L-glutamate from L-proline: step 2/2. The sequence is that of 1-pyrroline-5-carboxylate dehydrogenase from Staphylococcus aureus (strain MW2).